The primary structure comprises 550 residues: Glypican-1 (550 aa).

Residues 1-20 (MRFFPWGFWLLCVASAPARG) form the signal peptide. Disulfide bonds link cysteine 29-cysteine 65, cysteine 59-cysteine 253, cysteine 66-cysteine 256, cysteine 188-cysteine 340, cysteine 243-cysteine 276, cysteine 265-cysteine 412, and cysteine 269-cysteine 398. 2 N-linked (GlcNAc...) asparagine glycosylation sites follow: asparagine 76 and asparagine 113. Asparagine 382 carries an N-linked (GlcNAc...) asparagine glycan. Disordered stretches follow at residues 475–494 (FQDA…CPDD) and 502–522 (KSPS…GHGV). Over residues 481-494 (DMSGSGSGDSCPDD) the composition is skewed to low complexity. Residues serine 483, serine 485, and serine 487 are each glycosylated (O-linked (Xyl...) (heparan sulfate) serine). Glycine 524 carries the GPI-anchor amidated glycine lipid modification. The propeptide at 525-550 (ASSRSLPSAFLLFLSGASIVVQHLWR) is removed in mature form.

The protein belongs to the glypican family. Post-translationally, O-glycosylated with heparan sulfate.

The protein resides in the cell membrane. It is found in the endosome. The protein localises to the secreted. Its subcellular location is the extracellular space. In terms of biological role, cell surface proteoglycan that bears heparan sulfate. Modulates Wnt-signaling pathway. This chain is Glypican-1 (GPC1), found in Gallus gallus (Chicken).